The sequence spans 442 residues: Coiled-coil domain-containing protein 91 (442 aa).

The tract at residues 1 to 16 (MDDDDFGGFEAAETFD) is GGA1-binding motif. The segment at 1 to 27 (MDDDDFGGFEAAETFDGEQGGNQAVSP) is disordered. Ser-43 and Ser-46 each carry phosphoserine. 2 disordered regions span residues 48–80 (ELIL…ADSS) and 114–134 (HGAL…SNSQ). Coiled-coil stretches lie at residues 130–210 (VSNS…GHEA), 253–318 (HAQH…MKDV), and 346–408 (ARDQ…RRLD). Residues 211 to 414 (LSIIVDEYKA…RRLDQVTRQR (204 aa)) form a homodimerization region.

Homodimer. Interacts with GGA1, GGA2 and AP1G1.

The protein resides in the membrane. It is found in the golgi apparatus. The protein localises to the trans-Golgi network membrane. It localises to the trans-Golgi network. Functionally, involved in the regulation of membrane traffic through the trans-Golgi network (TGN). Functions in close cooperation with the GGAs in the sorting of hydrolases to lysosomes. The protein is Coiled-coil domain-containing protein 91 (Ccdc91) of Mus musculus (Mouse).